A 201-amino-acid chain; its full sequence is 3-isopropylmalate dehydratase small subunit (201 aa).

The protein belongs to the LeuD family. LeuD type 1 subfamily. As to quaternary structure, heterodimer of LeuC and LeuD.

It carries out the reaction (2R,3S)-3-isopropylmalate = (2S)-2-isopropylmalate. The protein operates within amino-acid biosynthesis; L-leucine biosynthesis; L-leucine from 3-methyl-2-oxobutanoate: step 2/4. In terms of biological role, catalyzes the isomerization between 2-isopropylmalate and 3-isopropylmalate, via the formation of 2-isopropylmaleate. This chain is 3-isopropylmalate dehydratase small subunit, found in Agrobacterium fabrum (strain C58 / ATCC 33970) (Agrobacterium tumefaciens (strain C58)).